Consider the following 312-residue polypeptide: Short chain dehydrogenase pgmD (312 aa).

Positions 46, 47, 171, 207, 211, and 242 each coordinate NADP(+). The Proton donor role is filled by Tyr-207. The active-site Lowers pKa of active site Tyr is Lys-211.

The protein belongs to the short-chain dehydrogenases/reductases (SDR) family.

It participates in pigment biosynthesis. It functions in the pathway secondary metabolite biosynthesis. Its function is as follows. Short chain dehydrogenase; part of the gene cluster that mediates the biosynthesis of pleosporalin A, ascomycone A, as well as a third cryptic naphthoquinone derived pigment, all responsible for the coloration of conidia. Essential for the production of pleosporalin A, but not the 2 other final products. The pathway begins with the biosynthesis of the cyclized heptaketide 3-acetonyl-1,6,8-trihydroxy-2-naphthaldehyde by the NR-PKS pgmA. The C-6 hydroxyl group is further methylated by the O-methyltransferase pgmB to yield fusarubinaldehyde which is in turn oxidized by the cytochrome P450 monooxygenase pgmC at C-9. The C-1 hydroxyl group is then methylated spontaneously. Although pgmE, pgmD and pgmH are essential for the production of pleosporalin A, it is not the case for the 2 other final products and it remains difficult to assign a specific function to each enzyme. PgmF and pgmG seem not to be involved in pigment biosynthesis although they were regulated by the cluster-specific transcription factor pgmR. This is Short chain dehydrogenase pgmD from Aspergillus terreus.